Reading from the N-terminus, the 98-residue chain is NADH-ubiquinone oxidoreductase chain 4L (98 aa).

3 helical membrane passes run M1–M21, S29–L49, and I61–I81.

This sequence belongs to the complex I subunit 4L family. In terms of assembly, core subunit of respiratory chain NADH dehydrogenase (Complex I) which is composed of 45 different subunits.

The protein resides in the mitochondrion inner membrane. The catalysed reaction is a ubiquinone + NADH + 5 H(+)(in) = a ubiquinol + NAD(+) + 4 H(+)(out). Functionally, core subunit of the mitochondrial membrane respiratory chain NADH dehydrogenase (Complex I) which catalyzes electron transfer from NADH through the respiratory chain, using ubiquinone as an electron acceptor. Part of the enzyme membrane arm which is embedded in the lipid bilayer and involved in proton translocation. The sequence is that of NADH-ubiquinone oxidoreductase chain 4L (MT-ND4L) from Rhinoceros unicornis (Greater Indian rhinoceros).